The primary structure comprises 1450 residues: DNA-directed RNA polymerase RPB1 homolog (1450 aa).

This sequence belongs to the RNA polymerase beta' chain family. As to quaternary structure, part of the viral DNA-directed RNA polymerase that consists of 8 polII-like subunits (RPB1, RPB2, RPB3, RPB5, RPB6, RPB7, RPB9, RPB10), a capping enzyme and a termination factor.

Its subcellular location is the virion. The catalysed reaction is RNA(n) + a ribonucleoside 5'-triphosphate = RNA(n+1) + diphosphate. Its function is as follows. Catalytic component of the DNA-directed RNA polymerase (RNAP) that catalyzes the transcription in the cytoplasm of viral DNA into RNA using the four ribonucleoside triphosphates as substrates. Forms the polymerase active center together with RPB2. Part of the core element with the central large cleft, the clamp element that moves to open and close the cleft and the jaws that are thought to grab the incoming DNA template. In African swine fever virus (strain Badajoz 1971 Vero-adapted) (Ba71V), this protein is DNA-directed RNA polymerase RPB1 homolog.